Consider the following 123-residue polypeptide: Large ribosomal subunit protein uL24 (123 aa).

This sequence belongs to the universal ribosomal protein uL24 family. As to quaternary structure, part of the 50S ribosomal subunit.

Its function is as follows. One of two assembly initiator proteins, it binds directly to the 5'-end of the 23S rRNA, where it nucleates assembly of the 50S subunit. In terms of biological role, located at the polypeptide exit tunnel on the outside of the subunit. The chain is Large ribosomal subunit protein uL24 from Pyrobaculum islandicum (strain DSM 4184 / JCM 9189 / GEO3).